The following is a 90-amino-acid chain: Probable Fe(2+)-trafficking protein (90 aa).

This sequence belongs to the Fe(2+)-trafficking protein family.

Functionally, could be a mediator in iron transactions between iron acquisition and iron-requiring processes, such as synthesis and/or repair of Fe-S clusters in biosynthetic enzymes. The polypeptide is Probable Fe(2+)-trafficking protein (Stutzerimonas stutzeri (strain A1501) (Pseudomonas stutzeri)).